Here is a 254-residue protein sequence, read N- to C-terminus: Phosphoribosylaminoimidazole-succinocarboxamide synthase (254 aa).

It belongs to the SAICAR synthetase family.

It carries out the reaction 5-amino-1-(5-phospho-D-ribosyl)imidazole-4-carboxylate + L-aspartate + ATP = (2S)-2-[5-amino-1-(5-phospho-beta-D-ribosyl)imidazole-4-carboxamido]succinate + ADP + phosphate + 2 H(+). It participates in purine metabolism; IMP biosynthesis via de novo pathway; 5-amino-1-(5-phospho-D-ribosyl)imidazole-4-carboxamide from 5-amino-1-(5-phospho-D-ribosyl)imidazole-4-carboxylate: step 1/2. This is Phosphoribosylaminoimidazole-succinocarboxamide synthase from Brucella anthropi (strain ATCC 49188 / DSM 6882 / CCUG 24695 / JCM 21032 / LMG 3331 / NBRC 15819 / NCTC 12168 / Alc 37) (Ochrobactrum anthropi).